A 96-amino-acid chain; its full sequence is Co-chaperonin GroES (96 aa).

This sequence belongs to the GroES chaperonin family. In terms of assembly, heptamer of 7 subunits arranged in a ring. Interacts with the chaperonin GroEL.

It is found in the cytoplasm. Functionally, together with the chaperonin GroEL, plays an essential role in assisting protein folding. The GroEL-GroES system forms a nano-cage that allows encapsulation of the non-native substrate proteins and provides a physical environment optimized to promote and accelerate protein folding. GroES binds to the apical surface of the GroEL ring, thereby capping the opening of the GroEL channel. The protein is Co-chaperonin GroES of Shewanella sediminis (strain HAW-EB3).